A 296-amino-acid polypeptide reads, in one-letter code: MANARALDKRRKSIRNIRKITRTMELIATARYKKAMDRAAAATAYTEQITKIVSRLADAGLDVQHPLLEQREKINTTRVLVLASNRGLCGGYNASILRTALPRIKSLRESIPNVIVDASGKRGVNGLKFRGIETEQRFLQFEDQPAYDDVEKIAEGYLAEYITGKIDRLDVVYTKFISTSKQEAVIETLLPLGSLGDESDSASDGSDDTNAEYEFLPSAESILEEVVPTSFKVKLFKCFLDAAVSEQVARMIAMKGATESAGDMIKQLSMTYNRARQSQITGEIMEIIGGVEALEG.

This sequence belongs to the ATPase gamma chain family. In terms of assembly, F-type ATPases have 2 components, CF(1) - the catalytic core - and CF(0) - the membrane proton channel. CF(1) has five subunits: alpha(3), beta(3), gamma(1), delta(1), epsilon(1). CF(0) has three main subunits: a, b and c.

Its subcellular location is the cell inner membrane. In terms of biological role, produces ATP from ADP in the presence of a proton gradient across the membrane. The gamma chain is believed to be important in regulating ATPase activity and the flow of protons through the CF(0) complex. In Rhodopirellula baltica (strain DSM 10527 / NCIMB 13988 / SH1), this protein is ATP synthase gamma chain.